The sequence spans 72 residues: Translation initiation factor IF-1 (72 aa).

One can recognise an S1-like domain in the interval 1–72 (MAKEESIEIE…SKGRITYRYK (72 aa)).

The protein belongs to the IF-1 family. In terms of assembly, component of the 30S ribosomal translation pre-initiation complex which assembles on the 30S ribosome in the order IF-2 and IF-3, IF-1 and N-formylmethionyl-tRNA(fMet); mRNA recruitment can occur at any time during PIC assembly.

The protein resides in the cytoplasm. One of the essential components for the initiation of protein synthesis. Stabilizes the binding of IF-2 and IF-3 on the 30S subunit to which N-formylmethionyl-tRNA(fMet) subsequently binds. Helps modulate mRNA selection, yielding the 30S pre-initiation complex (PIC). Upon addition of the 50S ribosomal subunit IF-1, IF-2 and IF-3 are released leaving the mature 70S translation initiation complex. In Chlorobium phaeovibrioides (strain DSM 265 / 1930) (Prosthecochloris vibrioformis (strain DSM 265)), this protein is Translation initiation factor IF-1.